Here is a 791-residue protein sequence, read N- to C-terminus: Probable phosphoketolase (791 aa).

It belongs to the XFP family. Requires thiamine diphosphate as cofactor.

This chain is Probable phosphoketolase, found in Pseudomonas putida (strain ATCC 700007 / DSM 6899 / JCM 31910 / BCRC 17059 / LMG 24140 / F1).